A 483-amino-acid polypeptide reads, in one-letter code: Allantoate deiminase 1 (483 aa).

The signal sequence occupies residues M1–M30. Residues H125, D136, E173, H239, and H457 each coordinate Mn(2+).

Belongs to the peptidase M20A family. Homodimer. Requires Mn(2+) as cofactor. Expressed in roots, stems and leaves. Not detected in nodules.

The protein localises to the endoplasmic reticulum. The enzyme catalyses allantoate + H2O + 2 H(+) = (S)-2-ureidoglycine + NH4(+) + CO2. With respect to regulation, inhibited by borate, fluoride, L-Asn and L-Asp. Involved in the catabolism of purine nucleotides. Can use allantoate as substrate. The sequential activity of AAH, UGLYAH and UAH allows a complete purine breakdown without the intermediate generation of urea. The chain is Allantoate deiminase 1 from Glycine max (Soybean).